The sequence spans 406 residues: 12S rRNA N(4)-cytidine methyltransferase METTL15 (406 aa).

The transit peptide at 1-22 (MLRYPYFYRTYNRLFSHFVDSG) directs the protein to the mitochondrion. S-adenosyl-L-methionine contacts are provided by residues 100-102 (GGH), aspartate 119, phenylalanine 146, aspartate 169, and glutamine 176. Serine 358 bears the Phosphoserine mark.

It belongs to the methyltransferase superfamily. RsmH family.

It is found in the mitochondrion matrix. The enzyme catalyses cytidine(839) in 12S rRNA + S-adenosyl-L-methionine = N(4)-methylcytidine(839) in 12S rRNA + S-adenosyl-L-homocysteine + H(+). In terms of biological role, N4-methylcytidine (m4C) methyltransferase responsible for the methylation of position C839 in mitochondrial 12S rRNA. Involved in the stabilization of 12S rRNA folding, therefore facilitating the assembly of the mitochondrial small ribosomal subunits. In Mus musculus (Mouse), this protein is 12S rRNA N(4)-cytidine methyltransferase METTL15.